An 85-amino-acid polypeptide reads, in one-letter code: Large ribosomal subunit protein bL27 (85 aa).

Belongs to the bacterial ribosomal protein bL27 family.

This chain is Large ribosomal subunit protein bL27, found in Campylobacter fetus subsp. fetus (strain 82-40).